A 280-amino-acid chain; its full sequence is Protein MGF 505-3R (280 aa).

It belongs to the asfivirus MGF 505 family.

In terms of biological role, plays a role in virus cell tropism, and may be required for efficient virus replication in macrophages. This is Protein MGF 505-3R from African swine fever virus (strain Badajoz 1971 Vero-adapted) (Ba71V).